The following is a 245-amino-acid chain: Orotidine 5'-phosphate decarboxylase (245 aa).

Substrate is bound by residues Asp22, Lys44, 71–80 (DLKFHDIPNT), Thr131, Arg192, Gln201, Gly221, and Arg222. Lys73 (proton donor) is an active-site residue.

It belongs to the OMP decarboxylase family. Type 1 subfamily. As to quaternary structure, homodimer.

It carries out the reaction orotidine 5'-phosphate + H(+) = UMP + CO2. It functions in the pathway pyrimidine metabolism; UMP biosynthesis via de novo pathway; UMP from orotate: step 2/2. Its function is as follows. Catalyzes the decarboxylation of orotidine 5'-monophosphate (OMP) to uridine 5'-monophosphate (UMP). The protein is Orotidine 5'-phosphate decarboxylase of Escherichia coli (strain K12 / MC4100 / BW2952).